We begin with the raw amino-acid sequence, 365 residues long: DNA replication and repair protein RecF (365 aa).

30–37 (GRNAQGKT) serves as a coordination point for ATP.

Belongs to the RecF family.

The protein resides in the cytoplasm. Its function is as follows. The RecF protein is involved in DNA metabolism; it is required for DNA replication and normal SOS inducibility. RecF binds preferentially to single-stranded, linear DNA. It also seems to bind ATP. The polypeptide is DNA replication and repair protein RecF (Streptococcus pneumoniae serotype 4 (strain ATCC BAA-334 / TIGR4)).